Reading from the N-terminus, the 746-residue chain is Histone-lysine N-methyltransferase EZH2 (746 aa).

The interaction with DNMT1, DNMT3A and DNMT3B stretch occupies residues 1 to 340; that stretch reads MGQTGKKSEK…AKEFAAALTA (340 aa). Serine 21 carries the post-translational modification Phosphoserine; by PKB/AKT1. The interval 39-68 is interaction with EED; sequence KSMFSSNRQKILERTEILNQEWKQRRIQPV. O-linked (GlcNAc) serine glycosylation is present at serine 75. Serine 76 is subject to Phosphoserine. A disordered region spans residues 180–222; that stretch reads QYNDDDDDDDGDDPEEREEKQKDLEDHRDDKESRPPRKFPSDK. Over residues 182-195 the composition is skewed to acidic residues; it reads NDDDDDDDGDDPEE. The segment covering 196 to 222 has biased composition (basic and acidic residues); it reads REEKQKDLEDHRDDKESRPPRKFPSDK. The tract at residues 329–522 is interaction with CDYL; that stretch reads EGAKEFAAAL…SSNHVYNYQP (194 aa). The residue at position 339 (threonine 339) is a Phosphothreonine. A disordered region spans residues 340–426; it reads AERIKTPPKR…PIKMKPNIEP (87 aa). Threonine 345 carries the post-translational modification Phosphothreonine; by CDK1 and CDK2. A compositionally biased stretch (basic residues) spans 345–357; that stretch reads TPPKRPGGRRRGR. Phosphoserine occurs at positions 363 and 366. A Phosphothreonine modification is found at threonine 367. Over residues 374 to 385 the composition is skewed to basic and acidic residues; the sequence is ESKDTDSDREAG. Phosphothreonine is present on threonine 487. A CXC domain is found at 503-605; sequence CRKIQLKKDG…SKNVSCKNCS (103 aa). Residues 612 to 727 form the SET domain; it reads KHLLLAPSDV…TGEELFFDYR (116 aa). A Glycyl lysine isopeptide (Lys-Gly) (interchain with G-Cter in SUMO2) cross-link involves residue lysine 634.

The protein belongs to the class V-like SAM-binding methyltransferase superfamily. Histone-lysine methyltransferase family. EZ subfamily. In terms of assembly, component of the PRC2/EED-EZH2 complex, which includes EED, EZH2, SUZ12, RBBP4 and RBBP7 and possibly AEBP2. The minimum components required for methyltransferase activity of the PRC2/EED-EZH2 complex are EED, EZH2 and SUZ12. The PRC2 complex may also interact with DNMT1, DNMT3A, DNMT3B and PHF1 via the EZH2 subunit and with SIRT1 via the SUZ12 subunit. Interacts with HDAC1 and HDAC2. Binds ATRX via the SET domain. Interacts with PRAME. Interacts with CDYL. Interacts with CLOCK, BMAL1 and CRY1. Interacts with DNMT3L; the interaction is direct. Interacts with EZHIP; the interaction blocks EZH2 methyltransferase activity. Interacts with ZNF263; recruited to the SIX3 promoter along with other proteins involved in chromatin modification and transcriptional corepression where it contributes to transcriptional repression. Interacts with ARMC12. Interacts with ZMYND8; the interaction is dependent on the presence of chromatin. Interacts with DDX18; this interaction inhibits the PRC2 complex. In terms of processing, phosphorylated by AKT1. Phosphorylation by AKT1 reduces methyltransferase activity. Phosphorylation at Thr-345 by CDK1 and CDK2 promotes maintenance of H3K27me3 levels at EZH2-target loci, thus leading to epigenetic gene silencing. Post-translationally, sumoylated. Glycosylated: O-GlcNAcylation at Ser-75 by OGT increases stability of EZH2 and facilitates the formation of H3K27me3 by the PRC2/EED-EZH2 complex. As to expression, in the ovary, expressed in primordial follicles and oocytes and also in external follicle cells (at protein level). Expressed in many tissues. Overexpressed in numerous tumor types including carcinomas of the breast, colon, larynx, lymphoma and testis.

It localises to the nucleus. The enzyme catalyses L-lysyl(27)-[histone H3] + 3 S-adenosyl-L-methionine = N(6),N(6),N(6)-trimethyl-L-lysyl(27)-[histone H3] + 3 S-adenosyl-L-homocysteine + 3 H(+). Polycomb group (PcG) protein. Catalytic subunit of the PRC2/EED-EZH2 complex, which methylates 'Lys-9' (H3K9me) and 'Lys-27' (H3K27me) of histone H3, leading to transcriptional repression of the affected target gene. Able to mono-, di- and trimethylate 'Lys-27' of histone H3 to form H3K27me1, H3K27me2 and H3K27me3, respectively. Displays a preference for substrates with less methylation, loses activity when progressively more methyl groups are incorporated into H3K27, H3K27me0 &gt; H3K27me1 &gt; H3K27me2. Compared to EZH1-containing complexes, it is more abundant in embryonic stem cells and plays a major role in forming H3K27me3, which is required for embryonic stem cell identity and proper differentiation. The PRC2/EED-EZH2 complex may also serve as a recruiting platform for DNA methyltransferases, thereby linking two epigenetic repression systems. Genes repressed by the PRC2/EED-EZH2 complex include HOXC8, HOXA9, MYT1, CDKN2A and retinoic acid target genes. EZH2 can also methylate non-histone proteins such as the transcription factor GATA4 and the nuclear receptor RORA. Regulates the circadian clock via histone methylation at the promoter of the circadian genes. Essential for the CRY1/2-mediated repression of the transcriptional activation of PER1/2 by the CLOCK-BMAL1 heterodimer; involved in the di and trimethylation of 'Lys-27' of histone H3 on PER1/2 promoters which is necessary for the CRY1/2 proteins to inhibit transcription. This Homo sapiens (Human) protein is Histone-lysine N-methyltransferase EZH2.